The following is a 400-amino-acid chain: MLNRVKLELKDPMDWNTMYQENEIYSGIHNMTNGLPSNSFLPTDVPTVTSSMTYMSNGLPGPVASIQGNLGSLGSMTQGMVGSLAPPPSTSAYPLGYCQGESEFQRDPRTYRRNYSHAKPPYSYISLITMAIQQAPNKMMTLNEIYQWIVDLFPYYRQNQQRWQNSIRHSLSFNDCFIKVPRSPEKPGKGSYWTLHPESGNMFENGCYLRRQKRFKCERSKSGEGERKGNKPGDETGGSLKETPVSFDDCSSSRSPQAAVNDGGRDSTGSSIHQATGGSPVGFSPTSEQAGTASQLMYPLGLSNDGYLGLVGEDVHLKHDPFSGRHPFSITQLMSSEQDQTYPNKMEMCPTTDHLVHYSNYSSDYHNLVSKNGLDMQTSSSSTDNGYYANMYSRPILSSL.

Residues 119 to 213 constitute a DNA-binding region (fork-head); it reads KPPYSYISLI…ENGCYLRRQK (95 aa). A compositionally biased stretch (basic and acidic residues) spans 218–234; that stretch reads ERSKSGEGERKGNKPGD. The segment at 218 to 290 is disordered; it reads ERSKSGEGER…VGFSPTSEQA (73 aa). 2 stretches are compositionally biased toward polar residues: residues 249–258 and 267–277; these read DCSSSRSPQA and STGSSIHQATG.

As to expression, primarily expressed in the dorsal blastopore lip (Spemann organizer) of early gastrulae. At later stages, expressed in the dorsal mesoderm and the neural floor plate. In the dorsal mesoderm, expressed in the notochord but not in the presomitic mesoderm. Also expressed in the mid-brain area.

It is found in the nucleus. In terms of biological role, transcriptional repressor involved in embryonic nervous system development. Plays a role in the induction and patterning of the anterior-posterior neural axis. Involved in the establishment of floor plate differentiation from neural plate cells during gastrulation. Binds the anf1 promoter sequence to restrict expression of anf1 to the anterior of the neural plate, thereby patterning the forebrain. Can bind to the HNF-3-alpha DNA target sequence. Cooperates with t/bra in a dose-dependent manner to specify dorsal mesoderm formation, including notochord. May be involved in the dorso-ventral patterning of the mesoderm. Binds to DNA via the target sequence 5'-[GA]TAAA[TC]A-3', with 5'-GTAAATA-3' being the preferred binding site. In Xenopus laevis (African clawed frog), this protein is Forkhead box protein A4-B (foxa4-b).